Here is a 287-residue protein sequence, read N- to C-terminus: Energy-coupling factor transporter ATP-binding protein EcfA2 (287 aa).

In terms of domain architecture, ABC transporter spans 3–245; sequence IKFENVSYVY…SEWLQKHHLA (243 aa). 40–47 contacts ATP; the sequence is GHTGSGKS.

It belongs to the ABC transporter superfamily. Energy-coupling factor EcfA family. In terms of assembly, forms a stable energy-coupling factor (ECF) transporter complex composed of 2 membrane-embedded substrate-binding proteins (S component), 2 ATP-binding proteins (A component) and 2 transmembrane proteins (T component).

It is found in the cell membrane. ATP-binding (A) component of a common energy-coupling factor (ECF) ABC-transporter complex. Unlike classic ABC transporters this ECF transporter provides the energy necessary to transport a number of different substrates. This chain is Energy-coupling factor transporter ATP-binding protein EcfA2, found in Lactobacillus delbrueckii subsp. bulgaricus (strain ATCC 11842 / DSM 20081 / BCRC 10696 / JCM 1002 / NBRC 13953 / NCIMB 11778 / NCTC 12712 / WDCM 00102 / Lb 14).